The sequence spans 229 residues: Large ribosomal subunit protein uL1 (229 aa).

It belongs to the universal ribosomal protein uL1 family. In terms of assembly, part of the 50S ribosomal subunit.

Binds directly to 23S rRNA. The L1 stalk is quite mobile in the ribosome, and is involved in E site tRNA release. Functionally, protein L1 is also a translational repressor protein, it controls the translation of the L11 operon by binding to its mRNA. This chain is Large ribosomal subunit protein uL1, found in Streptococcus pneumoniae (strain Taiwan19F-14).